A 706-amino-acid chain; its full sequence is MARKTPLKRYRNIGIVAHVDAGKTTTTERVLFYTGLSHKVGEVHDGAATMDWMEQEQERGITITSAATTCFWQGMNKQFDEHRINIIDTPGHVDFTIEVERSLRVLDGAVVVLCGSSGVQPQTETVWRQANKYEVPRMVFVNKMDRAGADYFMVLDQLKQKLGANTVPIQINWGAEDDFKGVIDLIQMKGILWDEANHGMNYELVEIPDELKESAAKYREQMVEAAAEASEELMDKYLEEGDLSEADIKAGLRRRTLDNEIVLVTCGSAFKNKGVQAVLDGVIEYMPSPTEVKAIEGELDDKDGTIATREADDSAPFAALAFKIATDPFVGTLTFIRVYSGVLKSGDSIFNSVKSKKERVGRIVQMHSNSREEIKEVYAGDIAACIGLKDVTTGDTLCDLNDKIILERMEFPDPVISVAVEPKSKPDQEKMGTALGKLAQEDPSFRVKTDEETGQTIISGMGELHLDIIVDRLRREFKVDANIGKPQVAYRETIRASVEQEGKFVRQSGGRGQYGHVLLRIEPLTAEDKGEDEDMTFKFASEIVGGVVPKEYVPAVEKGAYEQLQNGVIAGYPMIDVKVTLFDGSYHDVDSNETAFKVASSMAIKEGAPKAKAVLLEPVMKVEVVTPEEFMGDVMGDLNRRRGLVQGMDDSPSGKIIRATVPLAEMFGYATDLRSQTQGRASYTMEFADYEEAPSSVVEAVINQNG.

The region spanning 8-290 (KRYRNIGIVA…GVIEYMPSPT (283 aa)) is the tr-type G domain. GTP is bound by residues 17–24 (AHVDAGKT), 88–92 (DTPGH), and 142–145 (NKMD).

It belongs to the TRAFAC class translation factor GTPase superfamily. Classic translation factor GTPase family. EF-G/EF-2 subfamily.

It is found in the cytoplasm. In terms of biological role, catalyzes the GTP-dependent ribosomal translocation step during translation elongation. During this step, the ribosome changes from the pre-translocational (PRE) to the post-translocational (POST) state as the newly formed A-site-bound peptidyl-tRNA and P-site-bound deacylated tRNA move to the P and E sites, respectively. Catalyzes the coordinated movement of the two tRNA molecules, the mRNA and conformational changes in the ribosome. This Chromohalobacter salexigens (strain ATCC BAA-138 / DSM 3043 / CIP 106854 / NCIMB 13768 / 1H11) protein is Elongation factor G.